Consider the following 291-residue polypeptide: MQRFMFSRVVEHQRQISRGFLSLVPSLSPTAVPAMSRFFPKITASDSTSSIPFFTPDFINPKKTLEESLNNLEGLTCNQAEREMYLFPQINQQRLLNTTGSRFGQVLGTWQFRCTILPARVNRVREVHETSNNEKKQQKQKSSVNEKKPKKKKKSSISDIPRRTKFQKHHRGRINKGVSSQGYICSRYALQTLEPAWITSRQIEAGRRAMTRNIGRGLTVRVHIFADKPVTVRPPETRMGRGKGAPAFWVAVVKPGKIIYEMGGVSEKVAREAISIAASKLPAKTKFIISK.

The transit peptide at 1–27 directs the protein to the mitochondrion; it reads MQRFMFSRVVEHQRQISRGFLSLVPSL. Residues 127-137 show a composition bias toward basic and acidic residues; sequence VHETSNNEKKQ. A disordered region spans residues 127 to 173; the sequence is VHETSNNEKKQQKQKSSVNEKKPKKKKKSSISDIPRRTKFQKHHRGR. A compositionally biased stretch (basic residues) spans 163–173; sequence RTKFQKHHRGR.

This sequence belongs to the universal ribosomal protein uL16 family.

The protein localises to the mitochondrion. Functionally, could be a component of the large subunit of mitochondrial ribosome. This Arabidopsis thaliana (Mouse-ear cress) protein is Putative ribosomal protein uL16-like, mitochondrial.